The primary structure comprises 379 residues: uncharacterized protein (379 aa).

29-36 (GPLNSGKT) is a binding site for ATP.

It belongs to the archaeal ATPase family.

This is an uncharacterized protein from Methanocaldococcus jannaschii (strain ATCC 43067 / DSM 2661 / JAL-1 / JCM 10045 / NBRC 100440) (Methanococcus jannaschii).